A 1058-amino-acid polypeptide reads, in one-letter code: Carbamoyl phosphate synthase large chain (1058 aa).

Residues 1–401 (MPKRTDIQKI…SLLKACRSLE (401 aa)) form a carboxyphosphate synthetic domain region. ATP-binding residues include R129, R169, G175, G176, R208, I210, E215, G241, I242, H243, Q284, and E298. Residues 133–327 (KQLMEELEQP…IAKLAAKIAV (195 aa)) enclose the ATP-grasp 1 domain. Residues Q284, E298, and N300 each coordinate Mg(2+). 3 residues coordinate Mn(2+): Q284, E298, and N300. Residues 402–546 (IGVHHNEIPE…YSTYGWENES (145 aa)) form an oligomerization domain region. The carbamoyl phosphate synthetic domain stretch occupies residues 547–929 (IRSDKESVLV…ALYKAFEASY (383 aa)). Residues 671-861 (EQALKELDIP…MAQVATKLIL (191 aa)) enclose the ATP-grasp 2 domain. ATP is bound by residues R707, S746, I748, E752, G777, V778, H779, S780, Q820, and E832. 3 residues coordinate Mg(2+): Q820, E832, and N834. Mn(2+)-binding residues include Q820, E832, and N834. The 129-residue stretch at 930–1058 (LHLPTFGNVV…ESRSFVTEAI (129 aa)) folds into the MGS-like domain. Residues 930 to 1058 (LHLPTFGNVV…ESRSFVTEAI (129 aa)) are allosteric domain.

Belongs to the CarB family. In terms of assembly, composed of two chains; the small (or glutamine) chain promotes the hydrolysis of glutamine to ammonia, which is used by the large (or ammonia) chain to synthesize carbamoyl phosphate. Tetramer of heterodimers (alpha,beta)4. Mg(2+) is required as a cofactor. Requires Mn(2+) as cofactor.

It carries out the reaction hydrogencarbonate + L-glutamine + 2 ATP + H2O = carbamoyl phosphate + L-glutamate + 2 ADP + phosphate + 2 H(+). The catalysed reaction is hydrogencarbonate + NH4(+) + 2 ATP = carbamoyl phosphate + 2 ADP + phosphate + 2 H(+). The protein operates within amino-acid biosynthesis; L-arginine biosynthesis; carbamoyl phosphate from bicarbonate: step 1/1. It participates in pyrimidine metabolism; UMP biosynthesis via de novo pathway; (S)-dihydroorotate from bicarbonate: step 1/3. Functionally, large subunit of the glutamine-dependent carbamoyl phosphate synthetase (CPSase). CPSase catalyzes the formation of carbamoyl phosphate from the ammonia moiety of glutamine, carbonate, and phosphate donated by ATP, constituting the first step of 2 biosynthetic pathways, one leading to arginine and/or urea and the other to pyrimidine nucleotides. The large subunit (synthetase) binds the substrates ammonia (free or transferred from glutamine from the small subunit), hydrogencarbonate and ATP and carries out an ATP-coupled ligase reaction, activating hydrogencarbonate by forming carboxy phosphate which reacts with ammonia to form carbamoyl phosphate. This chain is Carbamoyl phosphate synthase large chain, found in Streptococcus pneumoniae (strain Hungary19A-6).